Consider the following 340-residue polypeptide: HTH-type transcriptional regulator PtxS (340 aa).

Positions 12–67 (VTISEVAQAAGVSKATVSRYIGGDRQLLADATAQRIEAVIEQLGYRPNRMASALKR) constitute an HTH lacI-type domain. The segment at residues 14 to 33 (ISEVAQAAGVSKATVSRYIG) is a DNA-binding region (H-T-H motif).

Homodimer.

2-ketogluconate acts as a molecular effector and causes dissociation of PtxS from its target promoter. Glucose negatively affects the molecular binding of PtxS and 2KGA, and gluconic acid inhibits the PtxS-2KGA binding reaction. Its function is as follows. Involved in the regulation of 2-ketogluconic acid metabolism via the control of the expression of the kgu operon. Binds directly to a 14-bp palindrome sequence via its conserved HTH motif. This is HTH-type transcriptional regulator PtxS from Pseudomonas plecoglossicida.